Consider the following 620-residue polypeptide: Pentatricopeptide repeat-containing protein At5g66520 (620 aa).

PPR repeat units follow at residues 79-113 (DTFLWNLMIRGFSCSDEPERSLLLYQRMLCSSAPH), 114-148 (NAYTFPSLLKACSNLSAFEETTQIHAQITKLGYEN), 149-179 (DVYAVNSLINSYAVTGNFKLAHLLFDRIPEP), 180-210 (DDVSWNSVIKGYVKAGKMDIALTLFRKMAEK), 211-245 (NAISWTTMISGYVQADMNKEALQLFHEMQNSDVEP), 246-280 (DNVSLANALSACAQLGALEQGKWIHSYLNKTRIRM), 281-311 (DSVLGCVLIDMYAKCGEMEEALEVFKNIKKK), 312-346 (SVQAWTALISGYAYHGHGREAISKFMEMQKMGIKP), 347-382 (NVITFTAVLTACSYTGLVEEGKLIFYSMERDYNLKP), and 383-413 (TIEHYGCIVDLLGRAGLLDEAKRFIQEMPLK). The segment at 418 to 493 (IWGALLKACR…VPGCSTISLE (76 aa)) is type E motif. Positions 494-524 (GTTHEFLAGDRSHPEIEKIQSKWRIMRRKLE) are type E(+) motif. The tract at residues 525-620 (ENGYVPELEE…DGKCSCGDYW (96 aa)) is type DYW motif.

It belongs to the PPR family. PCMP-H subfamily.

The protein is Pentatricopeptide repeat-containing protein At5g66520 (PCMP-H61) of Arabidopsis thaliana (Mouse-ear cress).